Here is a 1680-residue protein sequence, read N- to C-terminus: Sodium channel protein type 7 subunit alpha (1680 aa).

Residues 1-117 (MLTSPEPKGL…RRAVIKVLVH (117 aa)) are Cytoplasmic-facing. The I repeat unit spans residues 100–401 (TLSPLSSLRR…ILTMAYEQEK (302 aa)). A helical membrane pass occupies residues 118–137 (PLFRLLILISVLTDSILMCM). Topologically, residues 138–141 (SNLP) are extracellular. Residues 142 to 167 (EWILAVENTLLGIYTFEILVKVIARG) form a helical membrane-spanning segment. The Cytoplasmic portion of the chain corresponds to 168–178 (IWAGSFSFLGD). Residues 179–196 (LWNWLDFSVTLFELITRS) traverse the membrane as a helical segment. At 197–200 (SPLS) the chain is on the extracellular side. The helical transmembrane segment at 201-219 (SLPMFKTIRTLRILKIIPL) threads the bilayer. At 220–237 (NHGLQSIVVTLVQCLKKL) the chain is on the cytoplasmic side. The helical transmembrane segment at 238–259 (LGAIALALFFLTVSSLFGMGLF) threads the bilayer. Over 260-338 (MGNLKHKCVR…PDNGFTSFDN (79 aa)) the chain is Extracellular. A disulfide bridge connects residues Cys267 and Cys307. N-linked (GlcNAc...) asparagine glycans are attached at residues Asn281 and Asn309. The segment at residues 339–366 (FGWALLAMFRLMTQDYPELLYHQILYAS) is an intramembrane region (pore-forming). Gly367 is a topological domain (extracellular). The helical transmembrane segment at 368–407 (KIYMIFFVLISFWFAFYMASLFLGILTMAYEQEKQRASEE) threads the bilayer. The Cytoplasmic portion of the chain corresponds to 408–505 (SRDMDSKCHQ…EFADRIITHP (98 aa)). An II repeat occupies 487–756 (CSPCWIKLNE…QLAVAWIKMV (270 aa)). The helical transmembrane segment at 506-521 (LFDLFLVICIILNICF) threads the bilayer. Residues 522–530 (LALEHFPMS) are Extracellular-facing. A helical membrane pass occupies residues 531–559 (EELMSLLAIGNLVFIGIYTIEMILKIIAM). The Cytoplasmic portion of the chain corresponds to 560–568 (HPYGYFQIS). A helical transmembrane segment spans residues 569–586 (WHIFDSILVVLGLTEMLL). Residues 587–592 (ADIEEI) lie on the Extracellular side of the membrane. Residues 593 to 608 (TVFILVPLIFIKLGKY) form a helical membrane-spanning segment. Over 609–625 (APPFKNLMRILGRALVA) the chain is Cytoplasmic. The chain crosses the membrane as a helical span at residues 626–654 (LKDLVLLVSIFIYFSAVFGMKLFGRSYKD). At 655–672 (CVCHVDQDCQRQRWHMSD) the chain is on the extracellular side. Intrachain disulfides connect Cys657–Cys663 and Cys695–Cys704. The pore-forming intramembrane region spans 673-699 (FLHAYVTVFRILCGEWIETLWECMEVA). Residue Gly700 is a topological domain, extracellular. The chain crosses the membrane as a helical span at residues 701-731 (EAWCIPFYMMVILIGNLLILYLFVALVSSFA). Topologically, residues 732–933 (SYDATTEVSK…KTCCKIVENS (202 aa)) are cytoplasmic. A compositionally biased stretch (polar residues) spans 807–833 (DQSSGTEKTPVTESESQSLIASPSVSE). The disordered stretch occupies residues 807 to 874 (DQSSGTEKTP…MKQSSSSECS (68 aa)). Ser842 carries the phosphoserine modification. The stretch at 915 to 1223 (NGKIWRNIRK…KKQYRALKKL (309 aa)) is one III repeat. A helical transmembrane segment spans residues 934-952 (WFECFIGLVTLLCTGTLAL). At 953–960 (EDIYIDQR) the chain is on the extracellular side. Residues 961–989 (KTIKIFLEYGDMIFAYIFILEMLLKWVAY) form a helical membrane-spanning segment. The Cytoplasmic portion of the chain corresponds to 990 to 997 (GFKAYFSN). The chain crosses the membrane as a helical span at residues 998 to 1019 (NWYKLDFMVVIVLCLSLIGKTR). A topological domain (extracellular) is located at residue Glu1020. The helical transmembrane segment at 1021–1039 (DLNPLASIKFLRALRVLSQ) threads the bilayer. Over 1040–1054 (FERMKVVLRALIKTT) the chain is Cytoplasmic. A helical membrane pass occupies residues 1055 to 1079 (LPAVSVFLVCLMIWLLFSVMGVFLF). Topologically, residues 1080-1126 (AGKFYECIDPTRGERFSVFEVMNKSQCENLVFNESMPWENAKLNFDN) are extracellular. Cys1086 and Cys1106 are joined by a disulfide. 2 N-linked (GlcNAc...) asparagine glycosylation sites follow: Asn1102 and Asn1112. The segment at residues 1127 to 1153 (VGNGFLSLFQVATFNGWISIMNSAIDS) is an intramembrane region (pore-forming). At 1154–1166 (VGVYMQPSFEHSL) the chain is on the extracellular side. A helical membrane pass occupies residues 1167-1201 (HMYTYFIIFVVFGLFLPLCMLIGVIIRNFNKQKIK). Topologically, residues 1202–1249 (QGGSNIFITVKQKKQYRALKKLLYADSQKPAARPRNKFQGFICDVVTH) are cytoplasmic. An IV repeat occupies 1232-1530 (AARPRNKFQG…WNRFDPDRTQ (299 aa)). Residues 1250–1271 (RVFNVIIILLICFQATTIMIQN) form a helical membrane-spanning segment. Residues 1272–1275 (DEQS) are Extracellular-facing. A helical membrane pass occupies residues 1276–1304 (PQIETAVFWMNSLFTMLFTLECILKLTAF). The Cytoplasmic segment spans residues 1305–1311 (RCHYFTS). Residues 1312-1337 (AWNVHDFMVVVFSITGLLLPLSIGQY) traverse the membrane as a helical segment. Residues 1338–1340 (FVP) are Extracellular-facing. The chain crosses the membrane as a helical span at residues 1341–1361 (PSLVQLLLLSRIIHVLRPGKG). The Cytoplasmic portion of the chain corresponds to 1362-1376 (PKVFHDLMLPLMLSL). The chain crosses the membrane as a helical span at residues 1377–1401 (PALLNIALLIFLVMFIYAIFGMYNF). Residues 1402–1419 (AYVKKEAGINDVSNFETF) lie on the Extracellular side of the membrane. The pore-forming intramembrane region spans 1420 to 1443 (GSSMLCLFQVTTFSGWDGMLDAIF). Residues 1444–1467 (NSQWSDCDPDKINPGTQVRGDCGS) are Extracellular-facing. The cysteines at positions 1450 and 1465 are disulfide-linked. A helical transmembrane segment spans residues 1468-1503 (PSVGIFYFVSYILISWLIIVNMYVVLIMEFLSIPSK). Over 1504–1680 (RKNRTLSEDD…EEKASIQTQI (177 aa)) the chain is Cytoplasmic. Positions 1646–1680 (KIQDIPEIDDGREDPNSKGVHSGQIEEKASIQTQI) are disordered.

This sequence belongs to the sodium channel (TC 1.A.1.10) family. SCN7A subfamily. As to quaternary structure, the sodium channel formed by SCN7A is probably a heterooligomeric complex consisting of the ion conducting pore forming alpha subunit SCN7A and regulatory beta subunits such as SCN3B. Interacts with ATP1A1; activates ATP1A1 and thereby indirectly signals to nearby neurons to regulate sodium homeostasis. In terms of tissue distribution, not tissue specific but widely expressed.

Its subcellular location is the cell membrane. It carries out the reaction Na(+)(in) = Na(+)(out). Functionally, sodium leak channel functioning as an osmosensor regulating sodium ion levels in various tissues and organs. While most sodium channels are voltage-gated, SCN7A is not and lets sodium flow through membrane along its concentration gradient. In glial cells of the central nervous system, senses body-fluid sodium levels and controls salt intake behavior as well as voluntary water intake through activation of nearby neurons to maintain appropriate sodium levels in the body. By mediating sodium influx into keratinocytes, also plays a role in skin barrier homeostasis. The protein is Sodium channel protein type 7 subunit alpha of Rattus norvegicus (Rat).